The sequence spans 108 residues: Nucleoid-associated protein PLES_37951 (108 aa).

2 disordered regions span residues methionine 1–glutamate 25 and asparagine 87–phenylalanine 108. Polar residues predominate over residues asparagine 87–methionine 98.

The protein belongs to the YbaB/EbfC family. As to quaternary structure, homodimer.

The protein resides in the cytoplasm. It localises to the nucleoid. Its function is as follows. Binds to DNA and alters its conformation. May be involved in regulation of gene expression, nucleoid organization and DNA protection. The protein is Nucleoid-associated protein PLES_37951 of Pseudomonas aeruginosa (strain LESB58).